Here is a 195-residue protein sequence, read N- to C-terminus: Meiotically up-regulated gene 84 protein (195 aa).

Residues 1–84 (MTLTHHSTFI…IMVKVPTYEY (84 aa)) lie on the Cytoplasmic side of the membrane. The chain crosses the membrane as a helical span at residues 85–105 (YGFVMYLVSMLGFGVYIVWAL). Topologically, residues 106-122 (TPAPVLKFFEIHYYLSR) are lumenal. A helical transmembrane segment spans residues 123-143 (WWALAIPTWLFVLVIYIHVVL). Over 144–195 (NAYNTEVLTKPFSSLECIVDQYALVGEEDGAAHGRVVDLRLCDVNKQQLEET) the chain is Cytoplasmic.

The protein localises to the endoplasmic reticulum membrane. Has a role in meiosis. The polypeptide is Meiotically up-regulated gene 84 protein (mug84) (Schizosaccharomyces pombe (strain 972 / ATCC 24843) (Fission yeast)).